A 470-amino-acid polypeptide reads, in one-letter code: Cysteine--tRNA ligase (470 aa).

Cys-28 contributes to the Zn(2+) binding site. The 'HIGH' region motif lies at 30 to 40; that stretch reads PTVYNYIHIGN. Residues Cys-212, His-237, and Glu-241 each coordinate Zn(2+). The 'KMSKS' region signature appears at 271 to 275; the sequence is KMSKS. Position 274 (Lys-274) interacts with ATP.

Belongs to the class-I aminoacyl-tRNA synthetase family. Monomer. Zn(2+) is required as a cofactor.

The protein resides in the cytoplasm. The enzyme catalyses tRNA(Cys) + L-cysteine + ATP = L-cysteinyl-tRNA(Cys) + AMP + diphosphate. In Limosilactobacillus reuteri (strain DSM 20016) (Lactobacillus reuteri), this protein is Cysteine--tRNA ligase.